The chain runs to 236 residues: tRNA1(Val) (adenine(37)-N6)-methyltransferase (236 aa).

Belongs to the methyltransferase superfamily. tRNA (adenine-N(6)-)-methyltransferase family.

Its subcellular location is the cytoplasm. It catalyses the reaction adenosine(37) in tRNA1(Val) + S-adenosyl-L-methionine = N(6)-methyladenosine(37) in tRNA1(Val) + S-adenosyl-L-homocysteine + H(+). Its function is as follows. Specifically methylates the adenine in position 37 of tRNA(1)(Val) (anticodon cmo5UAC). This Aeromonas salmonicida (strain A449) protein is tRNA1(Val) (adenine(37)-N6)-methyltransferase.